The chain runs to 345 residues: Phosphoribosylformylglycinamidine cyclo-ligase (345 aa).

This sequence belongs to the AIR synthase family.

The protein localises to the cytoplasm. It catalyses the reaction 2-formamido-N(1)-(5-O-phospho-beta-D-ribosyl)acetamidine + ATP = 5-amino-1-(5-phospho-beta-D-ribosyl)imidazole + ADP + phosphate + H(+). It participates in purine metabolism; IMP biosynthesis via de novo pathway; 5-amino-1-(5-phospho-D-ribosyl)imidazole from N(2)-formyl-N(1)-(5-phospho-D-ribosyl)glycinamide: step 2/2. The protein is Phosphoribosylformylglycinamidine cyclo-ligase of Prochlorococcus marinus (strain MIT 9211).